The sequence spans 405 residues: Adenylosuccinate synthetase (405 aa).

Residues 12-18 and 40-42 contribute to the GTP site; these read GDEGKGK and GHT. Asp13 serves as the catalytic Proton acceptor. Mg(2+) is bound by residues Asp13 and Gly40. Residues 13–16, 38–41, Thr121, Arg135, Gln213, Thr228, and Arg297 each bind IMP; these read DEGK and NAGH. His41 (proton donor) is an active-site residue. 293 to 299 contacts substrate; it reads TTTGRAR. GTP is bound by residues Arg299, 325-327, and 390-392; these read KMD and SAG.

The protein belongs to the adenylosuccinate synthetase family. In terms of assembly, homodimer. It depends on Mg(2+) as a cofactor.

It is found in the cytoplasm. The catalysed reaction is IMP + L-aspartate + GTP = N(6)-(1,2-dicarboxyethyl)-AMP + GDP + phosphate + 2 H(+). It participates in purine metabolism; AMP biosynthesis via de novo pathway; AMP from IMP: step 1/2. Plays an important role in the de novo pathway of purine nucleotide biosynthesis. Catalyzes the first committed step in the biosynthesis of AMP from IMP. The sequence is that of Adenylosuccinate synthetase from Deinococcus deserti (strain DSM 17065 / CIP 109153 / LMG 22923 / VCD115).